A 1132-amino-acid chain; its full sequence is Tyrosine-protein kinase JAK2 (1132 aa).

Positions 1–239 (MGMACLTMTE…RYRFRRFIQQ (239 aa)) are interaction with cytokine/interferon/growth hormone receptors. Residues 37 to 380 (PVLLVYLYHS…GYYRLTADAH (344 aa)) enclose the FERM domain. A Phosphotyrosine; by autocatalysis modification is found at Tyr-119. Residues Tyr-372 and Tyr-373 each carry the phosphotyrosine modification. The region spanning 401–482 (HGPISMDFAI…SLKDLLNCYQ (82 aa)) is the SH2; atypical domain. Residue Ser-523 is modified to Phosphoserine. The Protein kinase 1 domain maps to 545–809 (LIFNESLGQG…AIIRDLNSLF (265 aa)). 2 positions are modified to phosphotyrosine: Tyr-570 and Tyr-813. The 278-residue stretch at 849 to 1126 (LKFLQQLGKG…RDLALRVDQI (278 aa)) folds into the Protein kinase 2 domain. 855-863 (LGKGNFGSV) is an ATP binding site. Tyr-868 carries the post-translational modification Phosphotyrosine; by autocatalysis. Lys-882 provides a ligand contact to ATP. Phosphotyrosine; by autocatalysis is present on residues Tyr-966 and Tyr-972. Residue Asp-976 is the Proton acceptor of the active site. Phosphotyrosine; by autocatalysis is present on residues Tyr-1007 and Tyr-1008.

Belongs to the protein kinase superfamily. Tyr protein kinase family. JAK subfamily. As to quaternary structure, interacts with IL23R, SKB1 and STAM2. Interacts with EPOR. Interacts with LYN. Interacts with SIRPA. Interacts with SH2B1. Interacts with TEC. Interacts with IFNGR2 (via intracellular domain). Interacts with LEPR (Isoform B). Interacts with HSP90AB1; promotes functional activation in a heat shock-dependent manner. Interacts with STRA6. Interacts with RHEX; this interaction occurs in a erythropoietin (EPO)-dependent manner. Interacts with ASB2; the interaction targets JAK2 for Notch-induced proteasomal degradation. Mg(2+) is required as a cofactor. Autophosphorylated, leading to regulate its activity. Leptin promotes phosphorylation on tyrosine residues, including phosphorylation on Tyr-813. Autophosphorylation on Tyr-119 in response to EPO down-regulates its kinase activity. Autophosphorylation on Tyr-868, Tyr-966 and Tyr-972 in response to growth hormone (GH) are required for maximal kinase activity. Also phosphorylated by TEC. Phosphorylated on tyrosine residues in response to interferon gamma signaling. Phosphorylated on tyrosine residues in response to a signaling cascade that is activated by increased cellular retinol. In terms of processing, undergoes Notch-induced ubiquitination and subsequent proteasomal degradation which is mediated by ASB1 or ASB2, the substrate-recognition components of probable ECS E3 ubiquitin-protein ligase complexes.

The protein localises to the endomembrane system. It is found in the cytoplasm. Its subcellular location is the nucleus. The catalysed reaction is L-tyrosyl-[protein] + ATP = O-phospho-L-tyrosyl-[protein] + ADP + H(+). Regulated by autophosphorylation, can both activate or decrease activity. Heme regulates its activity by enhancing the phosphorylation on Tyr-1007 and Tyr-1008. In terms of biological role, non-receptor tyrosine kinase involved in various processes such as cell growth, development, differentiation or histone modifications. Mediates essential signaling events in both innate and adaptive immunity. In the cytoplasm, plays a pivotal role in signal transduction via its association with type I receptors such as growth hormone (GHR), prolactin (PRLR), leptin (LEPR), erythropoietin (EPOR), thrombopoietin (THPO); or type II receptors including IFN-alpha, IFN-beta, IFN-gamma and multiple interleukins. Following ligand-binding to cell surface receptors, phosphorylates specific tyrosine residues on the cytoplasmic tails of the receptor, creating docking sites for STATs proteins. Subsequently, phosphorylates the STATs proteins once they are recruited to the receptor. Phosphorylated STATs then form homodimer or heterodimers and translocate to the nucleus to activate gene transcription. For example, cell stimulation with erythropoietin (EPO) during erythropoiesis leads to JAK2 autophosphorylation, activation, and its association with erythropoietin receptor (EPOR) that becomes phosphorylated in its cytoplasmic domain. Then, STAT5 (STAT5A or STAT5B) is recruited, phosphorylated and activated by JAK2. Once activated, dimerized STAT5 translocates into the nucleus and promotes the transcription of several essential genes involved in the modulation of erythropoiesis. Part of a signaling cascade that is activated by increased cellular retinol and that leads to the activation of STAT5 (STAT5A or STAT5B). In addition, JAK2 mediates angiotensin-2-induced ARHGEF1 phosphorylation. Plays a role in cell cycle by phosphorylating CDKN1B. Cooperates with TEC through reciprocal phosphorylation to mediate cytokine-driven activation of FOS transcription. In the nucleus, plays a key role in chromatin by specifically mediating phosphorylation of 'Tyr-41' of histone H3 (H3Y41ph), a specific tag that promotes exclusion of CBX5 (HP1 alpha) from chromatin. Up-regulates the potassium voltage-gated channel activity of KCNA3. The polypeptide is Tyrosine-protein kinase JAK2 (Pongo abelii (Sumatran orangutan)).